The sequence spans 384 residues: Dehydrogenase ALT3 (384 aa).

This sequence belongs to the iron-containing alcohol dehydrogenase family. It depends on Fe cation as a cofactor.

It functions in the pathway mycotoxin biosynthesis. Dehydrogenase; part of the gene cluster that mediates the biosynthesis of the host-selective toxins (HSTs) AAL-toxins, sphinganine-analog mycotoxins responsible for Alternaria stem canker on tomato by the tomato pathotype. The biosynthesis starts with the polyketide synthase ALT1-catalyzed C-16 carbon chain assembly from one starter acetyl-CoA unit with malonyl-CoA extender units. ALT1 also selectively transfers methyl groups at the first and the third cycle of chain elongation for AAL toxin. The C-16 polyketide chain is released from the enzyme by a nucleophilic attack of a carbanion, which is derived from R-carbon of glycin by decarboxylation, on the carbonyl carbon of polyketide acyl chain. This step is probably catalyzed by a pyridoxal 5'-phosphate-dependent aminoacyl transferase ALT4. The respective functions of the other enzymes encoded by the cluster have still to be elucidated. The sphingosine N-acyltransferase-like protein ALT7 seems not to act as a resistance/self-tolerance factor against the toxin in the toxin biosynthetic gene cluster, contrary to what is expected. This chain is Dehydrogenase ALT3, found in Alternaria alternata (Alternaria rot fungus).